The following is a 251-amino-acid chain: Developmental protein SEPALLATA 1 (251 aa).

The 55-residue stretch at 3 to 57 (RGRVELKRIENKINRQVTFAKRRNGLLKKAYELSVLCDAEVALIIFSNRGKLYEF) folds into the MADS-box domain. Residues 85–176 (AKELENSYRE…ALAMKLDDMI (92 aa)) adopt a coiled-coil conformation. The K-box domain maps to 88 to 178 (LENSYREYLK…AMKLDDMIGV (91 aa)).

Heterodimer with AGAMOUS capable of binding to CArG-box sequences. Interacts with AGL16. Interacts with TT16/AGL32. In terms of tissue distribution, expressed mainly in carpels, and weakly in stamens.

Its subcellular location is the nucleus. In terms of biological role, probable transcription factor. Functions with SEPALLATA2/AGL4 and SEPALLATA3/AGL9 to ensure proper development of petals, stamens and carpels, and to prevent the indeterminate growth of the flower meristem. Forms a heterodimer via the K-box domain with AGAMOUS, that could be involved in genes regulation during floral meristem development. This Arabidopsis thaliana (Mouse-ear cress) protein is Developmental protein SEPALLATA 1 (SEP1).